The primary structure comprises 126 residues: Putative regulator AldR (126 aa).

It belongs to the RutC family.

In terms of biological role, implicated in the regulation of isoleucine biosynthesis. The polypeptide is Putative regulator AldR (aldR) (Lactococcus lactis subsp. lactis (strain IL1403) (Streptococcus lactis)).